The following is a 252-amino-acid chain: Trans-aconitate 2-methyltransferase (252 aa).

This sequence belongs to the methyltransferase superfamily. Tam family.

It localises to the cytoplasm. It carries out the reaction trans-aconitate + S-adenosyl-L-methionine = (E)-3-(methoxycarbonyl)pent-2-enedioate + S-adenosyl-L-homocysteine. Catalyzes the S-adenosylmethionine monomethyl esterification of trans-aconitate. This chain is Trans-aconitate 2-methyltransferase, found in Escherichia coli (strain 55989 / EAEC).